Reading from the N-terminus, the 273-residue chain is Large ribosomal subunit protein uL2cz/uL2cy (273 aa).

The interval 224-273 (NPVDHPHGGGEGRAPIGRKKPATPWGYPALGRRSRKRNKYSDRFILRRRK) is disordered. The segment covering 262 to 273 (KYSDRFILRRRK) has biased composition (basic and acidic residues).

Belongs to the universal ribosomal protein uL2 family. In terms of assembly, part of the 50S ribosomal subunit.

It localises to the plastid. Its subcellular location is the chloroplast. The polypeptide is Large ribosomal subunit protein uL2cz/uL2cy (rpl2-A) (Piper cenocladum (Ant piper)).